We begin with the raw amino-acid sequence, 456 residues long: Equilibrative nucleoside transporter 2 (456 aa).

Residues Met1–His12 are Cytoplasmic-facing. Residues Leu13–Trp29 form a helical membrane-spanning segment. The Extracellular portion of the chain corresponds to Asn30–Asn68. N-linked (GlcNAc...) asparagine glycans are attached at residues Asn47 and Asn56. Residues Trp69–Pro93 traverse the membrane as a helical segment. Residues Glu94–Arg97 lie on the Cytoplasmic side of the membrane. Residues Ile98 to Val116 traverse the membrane as a helical segment. The Extracellular portion of the chain corresponds to Lys117–Leu124. The chain crosses the membrane as a helical span at residues Phe125–Leu143. Residues Gln144–Thr160 lie on the Cytoplasmic side of the membrane. Residues Leu161–Val185 traverse the membrane as a helical segment. Residues Asp186–Leu192 lie on the Extracellular side of the membrane. A helical membrane pass occupies residues Gly193–Pro213. Residues His214–Leu291 lie on the Cytoplasmic side of the membrane. Ser251 is modified (phosphoserine). A helical transmembrane segment spans residues Thr292 to Thr311. Residues Ala312–Lys323 are Extracellular-facing. Residues Trp324 to Trp342 form a helical membrane-spanning segment. The Cytoplasmic portion of the chain corresponds to Leu343–Gln359. A helical membrane pass occupies residues Leu360–Cys378. Topologically, residues His379–Asp393 are extracellular. A helical membrane pass occupies residues Ala394–Leu413. Residues Thr414–Gly431 lie on the Cytoplasmic side of the membrane. Residues Ala432–Phe452 traverse the membrane as a helical segment. At Lys453–Leu456 the chain is on the extracellular side.

The protein belongs to the SLC29A/ENT transporter (TC 2.A.57) family. Expressed in squeletal muscles. Expressed in testis at the blood-brain-barrier.

Its subcellular location is the apical cell membrane. The protein resides in the basolateral cell membrane. It carries out the reaction uridine(out) = uridine(in). The enzyme catalyses inosine(in) = inosine(out). It catalyses the reaction adenosine(in) = adenosine(out). The catalysed reaction is thymidine(in) = thymidine(out). It carries out the reaction hypoxanthine(out) = hypoxanthine(in). The enzyme catalyses adenine(out) = adenine(in). It catalyses the reaction cytidine(in) = cytidine(out). The catalysed reaction is thymine(out) = thymine(in). It carries out the reaction uracil(in) = uracil(out). The enzyme catalyses guanine(out) = guanine(in). It catalyses the reaction guanosine(in) = guanosine(out). Its function is as follows. Bidirectional uniporter involved in the facilitative transport of nucleosides and nucleobases, and contributes to maintaining their cellular homeostasis. Functions as a Na(+)-independent, passive transporter. Involved in the transport of nucleosides such as inosine, adenosine, uridine, thymidine, cytidine and guanosine. Also able to transport purine nucleobases (hypoxanthine, adenine, guanine) and pyrimidine nucleobases (thymine, uracil). Involved in nucleoside transport at basolateral membrane of kidney cells, allowing liver absorption of nucleoside metabolites. Mediates apical nucleoside uptake into Sertoli cells, thereby regulating the transport of nucleosides in testis across the blood-testis-barrier. Mediates both the influx and efflux of hypoxanthine in skeletal muscle microvascular endothelial cells to control the amount of intracellular hypoxanthine available for xanthine oxidase-mediated ROS production. The chain is Equilibrative nucleoside transporter 2 from Rattus norvegicus (Rat).